A 197-amino-acid chain; its full sequence is Peptide deformylase (197 aa).

Fe cation-binding residues include C106 and H148. E149 is an active-site residue. H152 provides a ligand contact to Fe cation.

It belongs to the polypeptide deformylase family. Fe(2+) serves as cofactor.

It catalyses the reaction N-terminal N-formyl-L-methionyl-[peptide] + H2O = N-terminal L-methionyl-[peptide] + formate. Functionally, removes the formyl group from the N-terminal Met of newly synthesized proteins. Requires at least a dipeptide for an efficient rate of reaction. N-terminal L-methionine is a prerequisite for activity but the enzyme has broad specificity at other positions. This Mycobacterium leprae (strain TN) protein is Peptide deformylase.